The chain runs to 329 residues: GTP 3',8-cyclase (329 aa).

The Radical SAM core domain occupies 8–229 (AFARTFYYLR…AGWQRRLPGR (222 aa)). Arginine 17 is a binding site for GTP. Positions 24 and 28 each coordinate [4Fe-4S] cluster. Tyrosine 30 is a binding site for S-adenosyl-L-methionine. Cysteine 31 provides a ligand contact to [4Fe-4S] cluster. Residue arginine 68 participates in GTP binding. Residue glycine 72 coordinates S-adenosyl-L-methionine. Residue threonine 99 coordinates GTP. Residue serine 123 coordinates S-adenosyl-L-methionine. Lysine 160 provides a ligand contact to GTP. Methionine 194 serves as a coordination point for S-adenosyl-L-methionine. Positions 257 and 260 each coordinate [4Fe-4S] cluster. 262-264 (RLR) provides a ligand contact to GTP. Cysteine 274 provides a ligand contact to [4Fe-4S] cluster.

It belongs to the radical SAM superfamily. MoaA family. As to quaternary structure, monomer and homodimer. It depends on [4Fe-4S] cluster as a cofactor.

The enzyme catalyses GTP + AH2 + S-adenosyl-L-methionine = (8S)-3',8-cyclo-7,8-dihydroguanosine 5'-triphosphate + 5'-deoxyadenosine + L-methionine + A + H(+). The protein operates within cofactor biosynthesis; molybdopterin biosynthesis. Catalyzes the cyclization of GTP to (8S)-3',8-cyclo-7,8-dihydroguanosine 5'-triphosphate. The protein is GTP 3',8-cyclase of Edwardsiella ictaluri (strain 93-146).